The sequence spans 379 residues: Cytochrome b (379 aa).

A run of 4 helical transmembrane segments spans residues 33–53, 77–98, 113–133, and 178–198; these read FGSL…FLDM, WLIR…YLHI, WNIG…GYVL, and FFAF…VHLL. Residues His83 and His97 each contribute to the heme b site. His182 and His196 together coordinate heme b. An a ubiquinone-binding site is contributed by His201. 4 consecutive transmembrane segments (helical) span residues 226–246, 288–308, 320–340, and 347–367; these read TKDF…VPFF, LGGV…PHIQ, ISQF…WIGG, and FIII…VLMP.

It belongs to the cytochrome b family. As to quaternary structure, the cytochrome bc1 complex contains 11 subunits: 3 respiratory subunits (MT-CYB, CYC1 and UQCRFS1), 2 core proteins (UQCRC1 and UQCRC2) and 6 low-molecular weight proteins (UQCRH/QCR6, UQCRB/QCR7, UQCRQ/QCR8, UQCR10/QCR9, UQCR11/QCR10 and a cleavage product of UQCRFS1). This cytochrome bc1 complex then forms a dimer. Heme b is required as a cofactor.

The protein resides in the mitochondrion inner membrane. In terms of biological role, component of the ubiquinol-cytochrome c reductase complex (complex III or cytochrome b-c1 complex) that is part of the mitochondrial respiratory chain. The b-c1 complex mediates electron transfer from ubiquinol to cytochrome c. Contributes to the generation of a proton gradient across the mitochondrial membrane that is then used for ATP synthesis. The protein is Cytochrome b (MT-CYB) of Dipodomys nelsoni (Nelson's kangaroo rat).